Reading from the N-terminus, the 215-residue chain is Phosphatidylserine decarboxylase proenzyme (215 aa).

Serine 181 serves as the catalytic Schiff-base intermediate with substrate; via pyruvic acid. Serine 181 bears the Pyruvic acid (Ser); by autocatalysis mark.

This sequence belongs to the phosphatidylserine decarboxylase family. PSD-A subfamily. As to quaternary structure, heterodimer of a large membrane-associated beta subunit and a small pyruvoyl-containing alpha subunit. The cofactor is pyruvate. Post-translationally, is synthesized initially as an inactive proenzyme. Formation of the active enzyme involves a self-maturation process in which the active site pyruvoyl group is generated from an internal serine residue via an autocatalytic post-translational modification. Two non-identical subunits are generated from the proenzyme in this reaction, and the pyruvate is formed at the N-terminus of the alpha chain, which is derived from the carboxyl end of the proenzyme. The post-translation cleavage follows an unusual pathway, termed non-hydrolytic serinolysis, in which the side chain hydroxyl group of the serine supplies its oxygen atom to form the C-terminus of the beta chain, while the remainder of the serine residue undergoes an oxidative deamination to produce ammonia and the pyruvoyl prosthetic group on the alpha chain.

It localises to the cell membrane. It carries out the reaction a 1,2-diacyl-sn-glycero-3-phospho-L-serine + H(+) = a 1,2-diacyl-sn-glycero-3-phosphoethanolamine + CO2. It participates in phospholipid metabolism; phosphatidylethanolamine biosynthesis; phosphatidylethanolamine from CDP-diacylglycerol: step 2/2. In terms of biological role, catalyzes the formation of phosphatidylethanolamine (PtdEtn) from phosphatidylserine (PtdSer). This Polynucleobacter asymbioticus (strain DSM 18221 / CIP 109841 / QLW-P1DMWA-1) (Polynucleobacter necessarius subsp. asymbioticus) protein is Phosphatidylserine decarboxylase proenzyme.